The following is a 674-amino-acid chain: Sodium/hydrogen exchanger 1 (674 aa).

The N-terminal stretch at methionine 1–serine 24 is a signal peptide. The disordered stretch occupies residues lysine 31–asparagine 65. The span at asparagine 37 to aspartate 55 shows a compositional bias: low complexity. The next 12 membrane-spanning stretches (helical) occupy residues threonine 120 to isoleucine 140, isoleucine 144 to phenylalanine 164, valine 175 to threonine 195, methionine 213 to valine 233, leucine 275 to valine 297, valine 314 to leucine 334, tryptophan 336 to methionine 356, valine 359 to leucine 379, threonine 401 to histidine 421, tryptophan 432 to leucine 452, isoleucine 460 to serine 480, and asparagine 499 to leucine 519. The disordered stretch occupies residues histidine 591–isoleucine 674. The segment covering aspartate 601–leucine 618 has biased composition (acidic residues). Residues aspartate 627–histidine 657 are compositionally biased toward low complexity. Over residues glycine 662 to isoleucine 674 the composition is skewed to polar residues.

It belongs to the monovalent cation:proton antiporter 1 (CPA1) transporter (TC 2.A.36) family.

The protein resides in the membrane. LY294002, an inhibitor of the catalytic subunit of PI3-kinase, blocks NHE1-dependent (but not NHE1-independent) increase in intracellular pH in response to cAMP. Regulation of intracellular pH homeostasis in response to cAMP, which is essential for chemotaxis. Necessary for F-actin localization and the kinetics of actin polymerization during chemotaxis and cell polarity but not for directional sensing. The chain is Sodium/hydrogen exchanger 1 (nhe1) from Dictyostelium discoideum (Social amoeba).